The sequence spans 250 residues: 5'-nucleotidase SurE (250 aa).

4 residues coordinate a divalent metal cation: D9, D10, S40, and N92.

It belongs to the SurE nucleotidase family. A divalent metal cation is required as a cofactor.

Its subcellular location is the cytoplasm. It carries out the reaction a ribonucleoside 5'-phosphate + H2O = a ribonucleoside + phosphate. In terms of biological role, nucleotidase that shows phosphatase activity on nucleoside 5'-monophosphates. This is 5'-nucleotidase SurE from Idiomarina loihiensis (strain ATCC BAA-735 / DSM 15497 / L2-TR).